Consider the following 395-residue polypeptide: Glutamate N-acetyltransferase (395 aa).

Substrate contacts are provided by T146, K169, T180, E263, N390, and T395. T180 (nucleophile) is an active-site residue.

This sequence belongs to the ArgJ family. In terms of assembly, heterotetramer of two alpha and two beta chains.

It localises to the cytoplasm. It catalyses the reaction N(2)-acetyl-L-ornithine + L-glutamate = N-acetyl-L-glutamate + L-ornithine. The protein operates within amino-acid biosynthesis; L-arginine biosynthesis; L-ornithine and N-acetyl-L-glutamate from L-glutamate and N(2)-acetyl-L-ornithine (cyclic): step 1/1. Catalyzes the transfer of the acetyl group from N(2)-acetylornithine to glutamate, forming N-acetylglutamate and L-ornithine. This chain is Glutamate N-acetyltransferase, found in Methanosarcina acetivorans (strain ATCC 35395 / DSM 2834 / JCM 12185 / C2A).